The following is a 796-amino-acid chain: MPLPGGLWWLLCCRRGFTLLHRDYGDGELSGDGDEDEDDETFELRTPSPAGGGRGSLDVTLTQPTRNGPISDRLQGWEETWSLIPDKGLPEEDPDIIVKGWLYREPRGGGARPWLLPRRAWFVLTRDSLDQFSSSGKGARRLGSLVLTSLCSVTGPERRPKETGLWSVTVSGRKHSIRLCSPRQAEAERWGVALREVIASKAPLETPTQLLLRDIQESCGDPEAVALIYRRNPILRHTSSALYAPLLPLPYEVSAPGPGYAPLREEAVRLFLALQALEGARRPGPLMQGVLQTCRDLPALQDELFLQLAKQTSGPAGPPGLPATQDPATLRYWQLLTCMSCTFRPGGAVRGHLLGHLERTEQALPDSELAEYARFIRKALGRTRGRELVPSLAEISALSRRQELLCTVHCPGAGACPVSIDSHTTAGEVARELVGRLGLARSRNAFALYEQRGAQERALAGGTLVADVLTRFENLTSEEAGLEDSPDCGWRLCLRLHGPLHPEGLSPEGHELPFLFEQAHALLLRGRPPPPEDTLRALAALRLQSLHRDFSPRGPLPLLDRLLPPPIPPREQPPCPTRRPPPSAALLAGALWSPGLAKRRAERARRGGTGRSTGSTAQVGGGGASTTAAVLGGWKRLRGMGQAEAMAAYLALAAQCPGFGAARYDVLELSTEPGGGAPQKLCLGLGAKAMSLSRPGETEPIHSVSYGHVAACQLIGPHTLALRVGDSQLLLQSPQVEEIMELVNAYLANPSPERPCRSGSSSGPPSQDLPDTSPPSQHQVLEEPQGQSGCLKQLQD.

Residues 1–18 (MPLPGGLWWLLCCRRGFT) form the signal peptide. The interval 28–71 (ELSGDGDEDEDDETFELRTPSPAGGGRGSLDVTLTQPTRNGPIS) is disordered. Over residues 29 to 41 (LSGDGDEDEDDET) the composition is skewed to acidic residues. Ser-30 bears the Phosphoserine mark. A compositionally biased stretch (polar residues) spans 59 to 68 (VTLTQPTRNG). Residues 95 to 199 (DIIVKGWLYR…WGVALREVIA (105 aa)) enclose the PH domain. Residues 237–399 (HTSSALYAPL…PSLAEISALS (163 aa)) enclose the MyTH4 domain. Residues 404-757 (LLCTVHCPGA…ANPSPERPCR (354 aa)) form the FERM domain. Residue Asn-474 is glycosylated (N-linked (GlcNAc...) asparagine). Disordered regions lie at residues 557–584 (PLLDRLLPPPIPPREQPPCPTRRPPPSA) and 598–625 (KRRAERARRGGTGRSTGSTAQVGGGGAS). Residues 563–583 (LPPPIPPREQPPCPTRRPPPS) show a composition bias toward pro residues. The span at 598 to 608 (KRRAERARRGG) shows a compositional bias: basic residues. The residue at position 638 (Arg-638) is an Omega-N-methylarginine. A disordered region spans residues 750–796 (PSPERPCRSGSSSGPPSQDLPDTSPPSQHQVLEEPQGQSGCLKQLQD). The segment covering 757–766 (RSGSSSGPPS) has biased composition (low complexity). Residues 774-796 (PPSQHQVLEEPQGQSGCLKQLQD) show a composition bias toward polar residues.

The chain is Pleckstrin homology domain-containing family H member 3 (Plekhh3) from Mus musculus (Mouse).